The sequence spans 115 residues: Small nuclear ribonucleoprotein Sm D2 (115 aa).

In terms of domain architecture, Sm spans Leu-30–Ala-115.

This sequence belongs to the snRNP core protein family. As to quaternary structure, belongs to the 40S cdc5-associated complex (or cwf complex), a spliceosome sub-complex reminiscent of a late-stage spliceosome composed of the U2, U5 and U6 snRNAs and at least brr2, cdc5, cwf2/prp3, cwf3/syf1, cwf4/syf3, cwf5/ecm2, spp42/cwf6, cwf7/spf27, cwf8, cwf9, cwf10, cwf11, cwf12, prp45/cwf13, cwf14, cwf15, cwf16, cwf17, cwf18, cwf19, cwf20, cwf21, cwf22, cwf23, cwf24, cwf25, cwf26, cyp7/cwf27, cwf28, cwf29/ist3, lea1, msl1, prp5/cwf1, prp10, prp12/sap130, prp17, prp22, sap61, sap62, sap114, sap145, slu7, smb1, smd1, smd3, smf1, smg1 and syf2.

The protein localises to the nucleus. It localises to the cytoplasm. The protein resides in the cytosol. Its function is as follows. Plays a role in pre-mRNA splicing as a core component of the spliceosomal U1, U2, U4 and U5 small nuclear ribonucleoproteins (snRNPs), the building blocks of the spliceosome. The protein is Small nuclear ribonucleoprotein Sm D2 (smd2) of Schizosaccharomyces pombe (strain 972 / ATCC 24843) (Fission yeast).